The following is a 218-amino-acid chain: N-alpha-acetyltransferase 11 (218 aa).

An interaction with NAA15 region spans residues 1-58; it reads MNIRNARPDDLMNMQHCNLLCLPENYQMKYYFYHGLSWPQLSYIAEDEDGKIVGYVLA. Positions 1–152 constitute an N-acetyltransferase domain; sequence MNIRNARPDD…DAYAMKRDLS (152 aa). The segment at 175–218 is disordered; that stretch reads EETQGGTLPDAGEACLPKNPTSKDSGSSDSTDVQDSSEDLDSIS. Residues 196–205 are compositionally biased toward low complexity; it reads SKDSGSSDST. Residues 209-218 are compositionally biased toward acidic residues; sequence DSSEDLDSIS.

It belongs to the acetyltransferase family. ARD1 subfamily. As to quaternary structure, component of the N-terminal acetyltransferase A (NatA) complex composed of NAA11 and NAA15. Interacts with HIF1A.

It is found in the cytoplasm. It localises to the nucleus. The enzyme catalyses N-terminal glycyl-[protein] + acetyl-CoA = N-terminal N(alpha)-acetylglycyl-[protein] + CoA + H(+). It carries out the reaction N-terminal L-alanyl-[protein] + acetyl-CoA = N-terminal N(alpha)-acetyl-L-alanyl-[protein] + CoA + H(+). The catalysed reaction is N-terminal L-seryl-[protein] + acetyl-CoA = N-terminal N(alpha)-acetyl-L-seryl-[protein] + CoA + H(+). It catalyses the reaction N-terminal L-valyl-[protein] + acetyl-CoA = N-terminal N(alpha)-acetyl-L-valyl-[protein] + CoA + H(+). The enzyme catalyses N-terminal L-cysteinyl-[protein] + acetyl-CoA = N-terminal N(alpha)-acetyl-L-cysteinyl-[protein] + CoA + H(+). It carries out the reaction N-terminal L-threonyl-[protein] + acetyl-CoA = N-terminal N(alpha)-acetyl-L-threonyl-[protein] + CoA + H(+). Functionally, displays alpha (N-terminal) acetyltransferase activity. Proposed alternative catalytic subunit of the N-terminal acetyltransferase A (NatA) complex. The chain is N-alpha-acetyltransferase 11 (Naa11) from Mus musculus (Mouse).